We begin with the raw amino-acid sequence, 390 residues long: NADH-quinone oxidoreductase subunit D (390 aa).

This sequence belongs to the complex I 49 kDa subunit family. In terms of assembly, NDH-1 is composed of 14 different subunits. Subunits NuoB, C, D, E, F, and G constitute the peripheral sector of the complex.

The protein resides in the cell inner membrane. The catalysed reaction is a quinone + NADH + 5 H(+)(in) = a quinol + NAD(+) + 4 H(+)(out). Its function is as follows. NDH-1 shuttles electrons from NADH, via FMN and iron-sulfur (Fe-S) centers, to quinones in the respiratory chain. The immediate electron acceptor for the enzyme in this species is believed to be ubiquinone. Couples the redox reaction to proton translocation (for every two electrons transferred, four hydrogen ions are translocated across the cytoplasmic membrane), and thus conserves the redox energy in a proton gradient. This Geotalea uraniireducens (strain Rf4) (Geobacter uraniireducens) protein is NADH-quinone oxidoreductase subunit D.